Reading from the N-terminus, the 217-residue chain is Small ribosomal subunit protein uS3 (217 aa).

The KH type-2 domain maps to 40–110 (IRDVINKGFN…EVYINIHEVR (71 aa)).

Belongs to the universal ribosomal protein uS3 family. As to quaternary structure, part of the 30S ribosomal subunit. Forms a tight complex with proteins S10 and S14.

Binds the lower part of the 30S subunit head. Binds mRNA in the 70S ribosome, positioning it for translation. The sequence is that of Small ribosomal subunit protein uS3 from Rickettsia massiliae (strain Mtu5).